The sequence spans 240 residues: Flavin-dependent thymidylate synthase (240 aa).

A ThyX domain is found at 13-235 (ITVELVKHSA…PETHAAFEKQ (223 aa)). Residues Ser-64, 87-89 (RHR), and Glu-95 contribute to the FAD site. DUMP is bound by residues 84–87 (EFMR), 95–99 (EESGR), and Arg-167. Residues 87-97 (RHRIASYNEES) carry the ThyX motif motif. Residues 183–185 (NAR) and Asn-189 contribute to the FAD site. Arg-194 provides a ligand contact to dUMP. The active-site Involved in ionization of N3 of dUMP, leading to its activation is the Arg-194.

The protein belongs to the thymidylate synthase ThyX family. Homotetramer. Requires FAD as cofactor.

It carries out the reaction dUMP + (6R)-5,10-methylene-5,6,7,8-tetrahydrofolate + NADPH + H(+) = dTMP + (6S)-5,6,7,8-tetrahydrofolate + NADP(+). The protein operates within pyrimidine metabolism; dTTP biosynthesis. Catalyzes the reductive methylation of 2'-deoxyuridine-5'-monophosphate (dUMP) to 2'-deoxythymidine-5'-monophosphate (dTMP) while utilizing 5,10-methylenetetrahydrofolate (mTHF) as the methyl donor, and NADPH and FADH(2) as the reductant. This Tropheryma whipplei (strain TW08/27) (Whipple's bacillus) protein is Flavin-dependent thymidylate synthase.